Reading from the N-terminus, the 574-residue chain is MEDSFKNLTIENKEQQTVTTTTTTTTTTTKKIQTLEVPLRRNGDLIEFSDSDEEYYYDDDYEEIEYDSDLSDEENEDRILGIRSSIPLNKTLQPKAQALEQKYQNKINVNSIANSISSKRVIDDDSHRALPNSVQNSIKEIKKKDDKQGVRIVDKEDRATTEQVLDPRTRLMLFKMINKGAFSEINGCISTGKEANVYHAFTPNEEERAVKVYKTSILVFKDRDRYVTGEFRFRRGYSKHNPRKMVKVWAEKEFRNLTRLKNAGIPCPTPLILRNHILVMTFIGKDGYAAPRLKDATVSQEKFGVIYLDCIKMMRTLFHKCRLVHADLSEYNMLYYKNQLYIIDVSQSVEHDHPHSLDFLRMDCSNVTDFFRKKEVNTMFIQELFEFITDLTITEDNIDQYLEKMLEKIQSRGETTDEQKIQEEVFRNAYIPRTLDQIIDLDRDMEKIERGEGRDIFYQNLTGLSKDLQNIKSKNDLINDSNENKDSDDSSSDSSEDSDDDSDSDQLNEDDEKIRKLVVIDPITKMEIRLEDMPKKDRKKFVKEMNKERRKTKIPKHIKKLTKKRKAEKFGKKK.

In terms of domain architecture, Protein kinase spans 171–462; the sequence is LMLFKMINKG…GRDIFYQNLT (292 aa). 2 residues coordinate ATP: Lys211 and Ile283. Asp327 serves as the catalytic Proton acceptor. Residues Asn332 and Asp344 each contribute to the Mg(2+) site. Residue Asp344 is the 4-aspartylphosphate intermediate of the active site. Positions 474-488 are enriched in basic and acidic residues; that stretch reads KNDLINDSNENKDSD. Disordered regions lie at residues 474–513 and 538–574; these read KNDL…DDEK and RKKF…GKKK. Residues 489–511 show a composition bias toward acidic residues; it reads DSSSDSSEDSDDDSDSDQLNEDD. Residues 548–574 are compositionally biased toward basic residues; the sequence is ERRKTKIPKHIKKLTKKRKAEKFGKKK.

It belongs to the protein kinase superfamily. RIO-type Ser/Thr kinase family. Requires Mg(2+) as cofactor.

It localises to the cytoplasm. It carries out the reaction L-seryl-[protein] + ATP = O-phospho-L-seryl-[protein] + ADP + H(+). It catalyses the reaction L-threonyl-[protein] + ATP = O-phospho-L-threonyl-[protein] + ADP + H(+). The enzyme catalyses ATP + H2O = ADP + phosphate + H(+). Functionally, required for the final endonucleolytic cleavage at site D converting 20S pre-rRNA into the mature 18S rRNA. Required for the final steps of cytoplasmic maturation of the 40S ribosomal subunit. Despite the protein kinase domain is proposed to act predominantly as an ATPase. This Dictyostelium discoideum (Social amoeba) protein is Serine/threonine-protein kinase rio1 (rio1).